The primary structure comprises 521 residues: Apolipoprotein N-acyltransferase (521 aa).

The next 5 helical transmembrane spans lie at 24-44, 71-91, 128-148, 151-171, and 182-202; these read IKET…FIAL, WLGF…IGYI, IGFL…FNNL, IADI…NSGI, and NLLN…YGMI. The region spanning 218 to 472 is the CN hydrolase domain; it reads LNIAAIQLNT…KGYLLSTVKL (255 aa). The Proton acceptor role is filled by Glu263. The active site involves Lys331. The active-site Nucleophile is Cys383.

Belongs to the CN hydrolase family. Apolipoprotein N-acyltransferase subfamily.

The protein localises to the cell inner membrane. It catalyses the reaction N-terminal S-1,2-diacyl-sn-glyceryl-L-cysteinyl-[lipoprotein] + a glycerophospholipid = N-acyl-S-1,2-diacyl-sn-glyceryl-L-cysteinyl-[lipoprotein] + a 2-acyl-sn-glycero-3-phospholipid + H(+). The protein operates within protein modification; lipoprotein biosynthesis (N-acyl transfer). Functionally, catalyzes the phospholipid dependent N-acylation of the N-terminal cysteine of apolipoprotein, the last step in lipoprotein maturation. This Borreliella burgdorferi (strain ATCC 35210 / DSM 4680 / CIP 102532 / B31) (Borrelia burgdorferi) protein is Apolipoprotein N-acyltransferase.